The sequence spans 181 residues: Ferritin BfrB (181 aa).

One can recognise a Ferritin-like diiron domain in the interval glycine 5–glycine 150. Residue lysine 10 forms an Isoglutamyl lysine isopeptide (Lys-Gln) (interchain with Q-Cter in protein Pup) linkage. Positions 22, 55, 58, 99, and 132 each coordinate Fe cation.

It belongs to the ferritin family. Prokaryotic subfamily. As to quaternary structure, homooligomer of 24 subunits that are packed together to form an approximately spherical molecule with a central cavity, in which large amounts of iron can be stored.

The catalysed reaction is 4 Fe(2+) + O2 + 4 H(+) = 4 Fe(3+) + 2 H2O. Its function is as follows. Iron-storage protein that displays ferroxidase activity, catalyzing the oxidation of Fe(2+) ions into Fe(3+) ions, that can then be deposited as a ferric-oxide mineral core within the central cavity of the protein complex. This is Ferritin BfrB (bfrB) from Mycolicibacterium smegmatis (strain ATCC 700084 / mc(2)155) (Mycobacterium smegmatis).